The primary structure comprises 311 residues: tRNA-cytidine(32) 2-sulfurtransferase (311 aa).

The short motif at 47–52 (SGGKDS) is the PP-loop motif element. Positions 122, 125, and 213 each coordinate [4Fe-4S] cluster.

Belongs to the TtcA family. As to quaternary structure, homodimer. Mg(2+) serves as cofactor. [4Fe-4S] cluster is required as a cofactor.

The protein resides in the cytoplasm. The enzyme catalyses cytidine(32) in tRNA + S-sulfanyl-L-cysteinyl-[cysteine desulfurase] + AH2 + ATP = 2-thiocytidine(32) in tRNA + L-cysteinyl-[cysteine desulfurase] + A + AMP + diphosphate + H(+). It participates in tRNA modification. Catalyzes the ATP-dependent 2-thiolation of cytidine in position 32 of tRNA, to form 2-thiocytidine (s(2)C32). The sulfur atoms are provided by the cysteine/cysteine desulfurase (IscS) system. In Pectobacterium carotovorum subsp. carotovorum (strain PC1), this protein is tRNA-cytidine(32) 2-sulfurtransferase.